Consider the following 216-residue polypeptide: MYNVIFLGAPGSGKGTQGEVVAKELRLAHMATGDLFRKAIERGDELGDTVKSYMERGELVPDEITISVVLKHLAGLKDVSGIILDGFPRSLRQAEALDEALVKQGEGIGRVIYINVPEDELVRRLSGRWVCRSCQSPYQCGCAEVAEGKCSRCQGELYQRPDDTPETVKERLKVYFSKTAPLIEYYRSKGKLSEIDGMAEITEVTKRIVSAIKCGK.

Residue 11–16 (GSGKGT) coordinates ATP. The segment at 31-60 (ATGDLFRKAIERGDELGDTVKSYMERGELV) is NMP. AMP-binding positions include T32, R37, 58 to 60 (ELV), 86 to 89 (GFPR), and Q93. Residues 127–163 (GRWVCRSCQSPYQCGCAEVAEGKCSRCQGELYQRPDD) are LID. R128 lines the ATP pocket. Zn(2+) contacts are provided by C131, C134, C150, and C153. AMP contacts are provided by R160 and R171. A199 contributes to the ATP binding site.

It belongs to the adenylate kinase family. As to quaternary structure, monomer.

Its subcellular location is the cytoplasm. The enzyme catalyses AMP + ATP = 2 ADP. Its pathway is purine metabolism; AMP biosynthesis via salvage pathway; AMP from ADP: step 1/1. Catalyzes the reversible transfer of the terminal phosphate group between ATP and AMP. Plays an important role in cellular energy homeostasis and in adenine nucleotide metabolism. The polypeptide is Adenylate kinase (Dehalococcoides mccartyi (strain ATCC BAA-2266 / KCTC 15142 / 195) (Dehalococcoides ethenogenes (strain 195))).